We begin with the raw amino-acid sequence, 114 residues long: Abscisic stress-ripening protein 2 (114 aa).

Disordered stretches follow at residues 1–25 (MAEEKHQHHHHLFHHKNKEDEGGPV) and 88–114 (FHEHHQKKDAKKEKKEVEGGHHHHHHY). The span at 7–16 (QHHHHLFHHK) shows a compositional bias: basic residues. The span at 97–107 (AKKEKKEVEGG) shows a compositional bias: basic and acidic residues.

The protein belongs to the abscisic acid and water stress-induced protein family.

The polypeptide is Abscisic stress-ripening protein 2 (Solanum lycopersicum (Tomato)).